The primary structure comprises 1925 residues: Plexin-D1 (1925 aa).

Low complexity predominate over residues 1 to 18 (MAPRAAGGAPLSARAAAA). Residues 1-23 (MAPRAAGGAPLSARAAAASPPPF) are disordered. The first 46 residues, 1–46 (MAPRAAGGAPLSARAAAASPPPFQTPPRCPVPLLLLLLLGAARAGA), serve as a signal peptide directing secretion. The Sema domain maps to 47 to 546 (LEIQRRFPSP…TSHQMARVKV (500 aa)). Over 47–1271 (LEIQRRFPSP…TLQLGGSETA (1225 aa)) the chain is Extracellular. N-linked (GlcNAc...) asparagine glycosylation occurs at Asn-86. 2 disulfides stabilise this stretch: Cys-104-Cys-114 and Cys-140-Cys-148. N-linked (GlcNAc...) asparagine glycans are attached at residues Asn-155, Asn-188, and Asn-224. Intrachain disulfides connect Cys-322/Cys-445 and Cys-345/Cys-389. 2 N-linked (GlcNAc...) asparagine glycosylation sites follow: Asn-481 and Asn-500. Intrachain disulfides connect Cys-549–Cys-566, Cys-555–Cys-600, Cys-558–Cys-575, Cys-569–Cys-581, and Cys-637–Cys-661. Asn-583 is a glycosylation site (N-linked (GlcNAc...) asparagine). Residues Asn-696, Asn-736, Asn-802, Asn-965, Asn-1017, Asn-1060, Asn-1099, Asn-1118, Asn-1132, Asn-1237, and Asn-1257 are each glycosylated (N-linked (GlcNAc...) asparagine). 3 IPT/TIG domains span residues 891–979 (PEIH…FSYV), 981–1066 (PLVH…FWYM), and 1069–1160 (PVIT…LDPE). A helical transmembrane segment spans residues 1272-1292 (IIVSIVICSVLLLLSVVALFV). The Cytoplasmic portion of the chain corresponds to 1293 to 1925 (FCTKSRRAER…DNIYECYSEA (633 aa)).

The protein belongs to the plexin family. In terms of assembly, interacts with NRP1 and SEMA4A. Interacts with SH3BP1; they dissociate upon SEMA3E binding to PLXND1 allowing SH3BP1 to transduce downstream signal through RAC1 inactivation. In terms of tissue distribution, detected at low levels in heart, placenta, lung, skeletal muscle, kidney, thymus and liver. Detected at very low levels in brain, colon, spleen, small intestine and peripheral blood leukocytes.

The protein resides in the cell membrane. It is found in the cell projection. It localises to the lamellipodium membrane. Functionally, cell surface receptor for SEMA4A and for class 3 semaphorins, such as SEMA3A, SEMA3C and SEMA3E. Plays an important role in cell-cell signaling, and in regulating the migration of a wide spectrum of cell types. Regulates the migration of thymocytes in the medulla. Regulates endothelial cell migration. Plays an important role in ensuring the specificity of synapse formation. Required for normal development of the heart and vasculature. Mediates anti-angiogenic signaling in response to SEMA3E. This Homo sapiens (Human) protein is Plexin-D1 (PLXND1).